Reading from the N-terminus, the 41-residue chain is Photosystem II reaction center protein L (41 aa).

Residues 20 to 40 (SLYLGLLLVFVVGLLFSSYFL) form a helical membrane-spanning segment.

This sequence belongs to the PsbL family. In terms of assembly, PSII is composed of 1 copy each of membrane proteins PsbA, PsbB, PsbC, PsbD, PsbE, PsbF, PsbH, PsbI, PsbJ, PsbK, PsbL, PsbM, PsbT, PsbX, PsbY, PsbZ, Psb30/Ycf12, peripheral proteins PsbO, CyanoQ (PsbQ), PsbU, PsbV and a large number of cofactors. It forms dimeric complexes.

It localises to the cellular thylakoid membrane. In terms of biological role, one of the components of the core complex of photosystem II (PSII). PSII is a light-driven water:plastoquinone oxidoreductase that uses light energy to abstract electrons from H(2)O, generating O(2) and a proton gradient subsequently used for ATP formation. It consists of a core antenna complex that captures photons, and an electron transfer chain that converts photonic excitation into a charge separation. This subunit is found at the monomer-monomer interface and is required for correct PSII assembly and/or dimerization. The sequence is that of Photosystem II reaction center protein L from Synechococcus sp. (strain JA-3-3Ab) (Cyanobacteria bacterium Yellowstone A-Prime).